The chain runs to 261 residues: Taurine import ATP-binding protein TauB (261 aa).

One can recognise an ABC transporter domain in the interval 4-233; it reads LTADRVSVRY…RWRAGDSARA (230 aa). 38–45 contributes to the ATP binding site; sequence GPSGCGKT.

Belongs to the ABC transporter superfamily. Taurine importer (TC 3.A.1.17.1) family. The complex is composed of two ATP-binding proteins (TauB), two transmembrane proteins (TauC) and a solute-binding protein (TauA).

Its subcellular location is the cell inner membrane. The catalysed reaction is taurine(out) + ATP + H2O = taurine(in) + ADP + phosphate + H(+). In terms of biological role, part of the ABC transporter complex TauABC involved in taurine import. Responsible for energy coupling to the transport system. This chain is Taurine import ATP-binding protein TauB, found in Chromobacterium violaceum (strain ATCC 12472 / DSM 30191 / JCM 1249 / CCUG 213 / NBRC 12614 / NCIMB 9131 / NCTC 9757 / MK).